Reading from the N-terminus, the 249-residue chain is Hydroxyacylglutathione hydrolase (249 aa).

7 residues coordinate Zn(2+): H53, H55, D57, H58, H110, D127, and H165.

This sequence belongs to the metallo-beta-lactamase superfamily. Glyoxalase II family. Monomer. It depends on Zn(2+) as a cofactor.

It catalyses the reaction an S-(2-hydroxyacyl)glutathione + H2O = a 2-hydroxy carboxylate + glutathione + H(+). It participates in secondary metabolite metabolism; methylglyoxal degradation; (R)-lactate from methylglyoxal: step 2/2. Functionally, thiolesterase that catalyzes the hydrolysis of S-D-lactoyl-glutathione to form glutathione and D-lactic acid. This chain is Hydroxyacylglutathione hydrolase, found in Hamiltonella defensa subsp. Acyrthosiphon pisum (strain 5AT).